A 477-amino-acid chain; its full sequence is Bifunctional protein HldE (477 aa).

The tract at residues 1–318 (MQIQLPMFQN…RRAVQQEQGA (318 aa)) is ribokinase. 195–198 (NLSE) serves as a coordination point for ATP. Residue D264 is part of the active site. The tract at residues 344 to 477 (FTNGCFDIIH…VEKIRKDQVK (134 aa)) is cytidylyltransferase.

The protein in the N-terminal section; belongs to the carbohydrate kinase PfkB family. In the C-terminal section; belongs to the cytidylyltransferase family. As to quaternary structure, homodimer.

It catalyses the reaction D-glycero-beta-D-manno-heptose 7-phosphate + ATP = D-glycero-beta-D-manno-heptose 1,7-bisphosphate + ADP + H(+). It carries out the reaction D-glycero-beta-D-manno-heptose 1-phosphate + ATP + H(+) = ADP-D-glycero-beta-D-manno-heptose + diphosphate. It participates in nucleotide-sugar biosynthesis; ADP-L-glycero-beta-D-manno-heptose biosynthesis; ADP-L-glycero-beta-D-manno-heptose from D-glycero-beta-D-manno-heptose 7-phosphate: step 1/4. It functions in the pathway nucleotide-sugar biosynthesis; ADP-L-glycero-beta-D-manno-heptose biosynthesis; ADP-L-glycero-beta-D-manno-heptose from D-glycero-beta-D-manno-heptose 7-phosphate: step 3/4. Its function is as follows. Catalyzes the phosphorylation of D-glycero-D-manno-heptose 7-phosphate at the C-1 position to selectively form D-glycero-beta-D-manno-heptose-1,7-bisphosphate. Functionally, catalyzes the ADP transfer from ATP to D-glycero-beta-D-manno-heptose 1-phosphate, yielding ADP-D-glycero-beta-D-manno-heptose. This Hahella chejuensis (strain KCTC 2396) protein is Bifunctional protein HldE.